We begin with the raw amino-acid sequence, 417 residues long: Probable serpin E3 (417 aa).

Residues 1-24 (MPQLSASSLFICLWLVDLCHVANS) form the signal peptide. Residues N50, N106, N140, N147, and N152 are each glycosylated (N-linked (GlcNAc...) asparagine).

The protein belongs to the serpin family.

It localises to the secreted. Its function is as follows. Probable serine protease inhibitor. This is Probable serpin E3 (serpine3) from Danio rerio (Zebrafish).